A 58-amino-acid chain; its full sequence is Rho-conotoxin TIA (58 aa).

Residues 1–16 form the signal peptide; it reads MFTVFLLVVLATTGVS. A propeptide spanning residues 17-38 is cleaved from the precursor; that stretch reads FTLDRASDGGNAVAKKSDVTAR. The segment at 40–42 is interaction with ADRA1B; it reads NWR. Cystine bridges form between C43/C49 and C44/C57. A lacks the Ser-Xaa-Pro motif that is crucial for potent interaction with nAChR region spans residues 45-47; sequence LIP. Residue C57 is modified to Cysteine amide.

Belongs to the conotoxin A superfamily. As to expression, expressed by the venom duct.

Its subcellular location is the secreted. Functionally, allosteric inhibitor of alpha-1B adrenergic receptors (ADRA1B). Binds to an allosteric modulatory site on transmembrane helix 6 and 7 at the base of extracellular loop 3 of ADRA1B. Also weakly inhibits alpha-1A (ADRA1A) and alpha-1D (ADRA1D) adrenergic receptors in a competitive manner. Potently inhibits contractions of vas deferens, spleen and aorta in response to noradrenaline. May also inhibits nicotinic acetylcholine receptors with a possible distinct nAChR binding mode from other alpha-conotoxins, due to a different three residue motif (lacks the Ser-Xaa-Pro motif). The polypeptide is Rho-conotoxin TIA (Conus tulipa (Fish-hunting cone snail)).